Consider the following 179-residue polypeptide: Replication restart protein DnaT (179 aa).

The segment at 154–179 (SNGGLPKRDVNTVSEPDSQIPPGFRG) is disordered.

This sequence belongs to the DnaT family. In terms of assembly, homooligomerizes. Interacts with PriB. Component of the replication restart primosome. Primosome assembly occurs via a 'hand-off' mechanism. PriA binds to replication forks, subsequently PriB then DnaT bind; DnaT then displaces ssDNA to generate the helicase loading substrate.

Its function is as follows. Involved in the restart of stalled replication forks, which reloads the replicative helicase on sites other than the origin of replication. Can function in multiple replication restart pathways. Displaces ssDNA from a PriB-ssDNA complex. Probably forms a spiral filament on ssDNA. The polypeptide is Replication restart protein DnaT (Escherichia coli O127:H6 (strain E2348/69 / EPEC)).